The chain runs to 1183 residues: DNA-directed RNA polymerase subunit beta' (1183 aa).

Zn(2+) contacts are provided by cysteine 60, cysteine 62, cysteine 75, and cysteine 78. 3 residues coordinate Mg(2+): aspartate 449, aspartate 451, and aspartate 453. Zn(2+) contacts are provided by cysteine 794, cysteine 867, cysteine 874, and cysteine 877.

This sequence belongs to the RNA polymerase beta' chain family. As to quaternary structure, the RNAP catalytic core consists of 2 alpha, 1 beta, 1 beta' and 1 omega subunit. When a sigma factor is associated with the core the holoenzyme is formed, which can initiate transcription. It depends on Mg(2+) as a cofactor. Zn(2+) serves as cofactor.

The catalysed reaction is RNA(n) + a ribonucleoside 5'-triphosphate = RNA(n+1) + diphosphate. Its function is as follows. DNA-dependent RNA polymerase catalyzes the transcription of DNA into RNA using the four ribonucleoside triphosphates as substrates. The sequence is that of DNA-directed RNA polymerase subunit beta' from Caldanaerobacter subterraneus subsp. tengcongensis (strain DSM 15242 / JCM 11007 / NBRC 100824 / MB4) (Thermoanaerobacter tengcongensis).